The following is a 598-amino-acid chain: CBP80/20-dependent translation initiation factor (598 aa).

Position 1 is an N-acetylmethionine (M1). Low complexity predominate over residues 1 to 18 (MENSSAASASSEAGSSRS). 3 disordered regions span residues 1-20 (MENS…RSQE), 43-90 (DKTE…SKDN), and 180-336 (IAHT…RIGE). Positions 1–305 (MENSSAASAS…APRSPDTLAP (305 aa)) are interaction with NCBP1/CBP80. S18 carries the post-translational modification Phosphoserine. A compositionally biased stretch (basic and acidic residues) spans 43–55 (DKTEGDGESERTQ). Residues 56-75 (SHISQWTADCSEPLDSSCSF) are compositionally biased toward polar residues. Residues 183–198 (TKKLFRRRRNDRRRQQ) are compositionally biased toward basic residues. The segment covering 258-272 (PPGDKGEAGAHRNAK) has biased composition (basic and acidic residues). A Phosphothreonine modification is found at T289. S299 bears the Phosphoserine mark. Residues 321 to 336 (VETKRKDSILPERIGE) are compositionally biased toward basic and acidic residues. The 202-residue stretch at 376-577 (IEILNSMRNN…LEVIELHANS (202 aa)) folds into the MIF4G domain.

Belongs to the CTIF family. As to quaternary structure, interacts with NCBP1/CBP80; the interaction is direct. Associates with the eukaryotic translation initiation factor 3 (eIF-3) complex. In terms of tissue distribution, widely expressed.

It localises to the cytoplasm. The protein localises to the perinuclear region. Functionally, specifically required for the pioneer round of mRNA translation mediated by the cap-binding complex (CBC), that takes place during or right after mRNA export via the nuclear pore complex (NPC). Acts via its interaction with the NCBP1/CBP80 component of the CBC complex and recruits the 40S small subunit of the ribosome via eIF3. In contrast, it is not involved in steady state translation, that takes place when the CBC complex is replaced by cytoplasmic cap-binding protein eIF4E. Also required for nonsense-mediated mRNA decay (NMD), the pioneer round of mRNA translation mediated by the cap-binding complex playing a central role in nonsense-mediated mRNA decay (NMD). This chain is CBP80/20-dependent translation initiation factor (CTIF), found in Homo sapiens (Human).